Consider the following 367-residue polypeptide: Mitogen-activated protein kinase 12 (367 aa).

In terms of domain architecture, Protein kinase spans 27–311 (YQDLQPVGSG…AAEALTHPYF (285 aa)). Residues 33–41 (VGSGAYGAV) and Lys56 each bind ATP. The active-site Proton acceptor is the Asp153. Position 183 is a phosphothreonine (Thr183). The short motif at 183-185 (TGY) is the TXY element. Tyr185 is subject to Phosphotyrosine.

It belongs to the protein kinase superfamily. CMGC Ser/Thr protein kinase family. MAP kinase subfamily. As to quaternary structure, monomer. Interacts with the PDZ domain of the syntrophin SNTA1. Interacts with SH3BP5, LIN7C, SCRIB and SYNJ2BP. Interacts with PTPN4; this interaction induces the activation of PTPN4 phosphatase activity. The cofactor is Mg(2+). Post-translationally, dually phosphorylated on Thr-183 and Tyr-185 by MAP2K3/MKK3 and MAP2K6/MKK6, which activates the enzyme. In terms of processing, ubiquitinated. Ubiquitination leads to degradation by the proteasome pathway. As to expression, highly expressed in skeletal muscle. Also expressed in the heart, particularly in cardiac myocytes, lung, thymus and testes.

The protein resides in the cytoplasm. It is found in the nucleus. Its subcellular location is the mitochondrion. It catalyses the reaction L-seryl-[protein] + ATP = O-phospho-L-seryl-[protein] + ADP + H(+). The enzyme catalyses L-threonyl-[protein] + ATP = O-phospho-L-threonyl-[protein] + ADP + H(+). With respect to regulation, activated by phosphorylation on threonine and tyrosine. MAP2K3/MKK3 and MAP2K6/MKK6 are both essential for the activation of MAPK12 induced by environmental stress, whereas MAP2K6/MKK6 is the major MAPK12 activator in response to TNF-alpha. Its function is as follows. Serine/threonine kinase which acts as an essential component of the MAP kinase signal transduction pathway. MAPK12 is one of the four p38 MAPKs which play an important role in the cascades of cellular responses evoked by extracellular stimuli such as pro-inflammatory cytokines or physical stress leading to direct activation of transcription factors such as ELK1 and ATF2. Accordingly, p38 MAPKs phosphorylate a broad range of proteins and it has been estimated that they may have approximately 200 to 300 substrates each. Some of the targets are downstream kinases such as MAPKAPK2, which are activated through phosphorylation and further phosphorylate additional targets. Plays a role in myoblast differentiation and also in the down-regulation of cyclin D1 in response to hypoxia in adrenal cells suggesting MAPK12 may inhibit cell proliferation while promoting differentiation. Phosphorylates DLG1. Following osmotic shock, MAPK12 in the cell nucleus increases its association with nuclear DLG1, thereby causing dissociation of DLG1-SFPQ complexes. This function is independent of its catalytic activity and could affect mRNA processing and/or gene transcription to aid cell adaptation to osmolarity changes in the environment. Regulates UV-induced checkpoint signaling and repair of UV-induced DNA damage and G2 arrest after gamma-radiation exposure. MAPK12 is involved in the regulation of SLC2A1 expression and basal glucose uptake in L6 myotubes; and negatively regulates SLC2A4 expression and contraction-mediated glucose uptake in adult skeletal muscle. C-Jun (JUN) phosphorylation is stimulated by MAPK14 and inhibited by MAPK12, leading to a distinct AP-1 regulation. MAPK12 is required for the normal kinetochore localization of PLK1, prevents chromosomal instability and supports mitotic cell viability. MAPK12-signaling is also positively regulating the expansion of transient amplifying myogenic precursor cells during muscle growth and regeneration. This chain is Mitogen-activated protein kinase 12 (Mapk12), found in Mus musculus (Mouse).